The following is a 152-amino-acid chain: MAKRVQVVLNEDIKSLGNDGDLVEVAPGFARNFLLPNKKALPVTPTVLKQVEHRRAKQAEKEAAKKQEAIDFQTALTTIGRFTVKKQVGEDGVLFGTVTNGDVAEVVKEATKKDIDRRDISIPEIHGVGKYKVQIKLHNEVNAEINLEVTSY.

It belongs to the bacterial ribosomal protein bL9 family.

Binds to the 23S rRNA. The polypeptide is Large ribosomal subunit protein bL9 (Prochlorococcus marinus (strain NATL2A)).